Reading from the N-terminus, the 319-residue chain is Vesicle-associated membrane protein-associated protein scs22 (319 aa).

The MSP domain maps to 1 to 121; sequence MALECDSTIV…SERKIRCVYS (121 aa). The Cytoplasmic segment spans residues 1–298; it reads MALECDSTIV…GAKVVPQIHN (298 aa). Residues 127–150 show a composition bias toward low complexity; that stretch reads ANAHANAHHQPAQTTTTSIPTSAT. Residues 127–244 are disordered; the sequence is ANAHANAHHQ…TTSPNNENNA (118 aa). 3 stretches are compositionally biased toward polar residues: residues 151–165, 185–201, and 231–244; these read DNYT…QSYS, STAT…SAVS, and SVPT…ENNA. At T236 the chain carries Phosphothreonine. Phosphoserine is present on residues S237 and S281. The chain crosses the membrane as a helical; Anchor for type IV membrane protein span at residues 299 to 319; it reads TVTVQTAFLLAIICFLIGLLF.

Belongs to the VAMP-associated protein (VAP) (TC 9.B.17) family. Interacts with epr1.

It localises to the endoplasmic reticulum membrane. Functionally, vesicle-associated membrane protein-associated protein (VAP) implicated in maintaining the cortical endoplasmic reticulum (ER)-plasma membrane (PM) attachment. ER-PM contacts function to modulate the distribution of contractile ring components to ensure robust ring assembly. ER-PM contacts function also in controlling exocytosis and maintenance of cell polarity regulating cell shape. VAPs play an important role in regulating eisosome assembly. VAPs also contribute to ER-phagy by tethering atg8 to the ER membrane, but also by maintaining the ER-plasma membrane contact. This Schizosaccharomyces pombe (strain 972 / ATCC 24843) (Fission yeast) protein is Vesicle-associated membrane protein-associated protein scs22 (scs22).